The chain runs to 89 residues: Small ribosomal subunit protein uS15 (89 aa).

It belongs to the universal ribosomal protein uS15 family. As to quaternary structure, part of the 30S ribosomal subunit. Forms a bridge to the 50S subunit in the 70S ribosome, contacting the 23S rRNA.

Functionally, one of the primary rRNA binding proteins, it binds directly to 16S rRNA where it helps nucleate assembly of the platform of the 30S subunit by binding and bridging several RNA helices of the 16S rRNA. In terms of biological role, forms an intersubunit bridge (bridge B4) with the 23S rRNA of the 50S subunit in the ribosome. This is Small ribosomal subunit protein uS15 from Caulobacter sp. (strain K31).